The following is a 1235-amino-acid chain: ATP-dependent helicase/nuclease subunit A (1235 aa).

The UvrD-like helicase ATP-binding domain maps to 12-482 (TLWTDDQWKA…IDLSQNFRSR (471 aa)). 33-40 (AAAGSGKT) contributes to the ATP binding site. A UvrD-like helicase C-terminal domain is found at 509-800 (AAELTLGANF…RMMTIHASKG (292 aa)).

It belongs to the helicase family. AddA subfamily. As to quaternary structure, heterodimer of AddA and AddB/RexB. Mg(2+) serves as cofactor.

The catalysed reaction is Couples ATP hydrolysis with the unwinding of duplex DNA by translocating in the 3'-5' direction.. It catalyses the reaction ATP + H2O = ADP + phosphate + H(+). In terms of biological role, the heterodimer acts as both an ATP-dependent DNA helicase and an ATP-dependent, dual-direction single-stranded exonuclease. Recognizes the chi site generating a DNA molecule suitable for the initiation of homologous recombination. The AddA nuclease domain is required for chi fragment generation; this subunit has the helicase and 3' -&gt; 5' nuclease activities. The protein is ATP-dependent helicase/nuclease subunit A of Listeria welshimeri serovar 6b (strain ATCC 35897 / DSM 20650 / CCUG 15529 / CIP 8149 / NCTC 11857 / SLCC 5334 / V8).